A 306-amino-acid chain; its full sequence is Pantothenate kinase (306 aa).

Position 90–97 (90–97) interacts with ATP; the sequence is GSVAVGKS.

The protein belongs to the prokaryotic pantothenate kinase family.

The protein resides in the cytoplasm. The catalysed reaction is (R)-pantothenate + ATP = (R)-4'-phosphopantothenate + ADP + H(+). Its pathway is cofactor biosynthesis; coenzyme A biosynthesis; CoA from (R)-pantothenate: step 1/5. This Lactococcus lactis subsp. cremoris (strain SK11) protein is Pantothenate kinase.